A 555-amino-acid polypeptide reads, in one-letter code: 6-phosphofructo-2-kinase/fructose-2,6-bisphosphatase 3 (555 aa).

Residues methionine 1 to glutamine 245 form a 6-phosphofructo-2-kinase region. Glycine 42–tyrosine 50 is an ATP binding site. Residues arginine 75 and arginine 99 each contribute to the beta-D-fructose 6-phosphate site. Aspartate 125 is an active-site residue. Beta-D-fructose 6-phosphate is bound by residues threonine 127 and arginine 133. Residue cysteine 155 is part of the active site. Asparagine 164–lysine 169 is an ATP binding site. Lysine 169, arginine 190, and tyrosine 194 together coordinate beta-D-fructose 6-phosphate. Residues proline 246–tyrosine 555 are fructose-2,6-bisphosphatase. Arginine 253 is a beta-D-fructose 2,6-bisphosphate binding site. Histidine 254 functions as the Tele-phosphohistidine intermediate in the catalytic mechanism. The beta-D-fructose 2,6-bisphosphate site is built by asparagine 260 and glycine 266. Residue glutamate 323 is the Proton donor/acceptor of the active site. Tyrosine 334, arginine 348, lysine 352, tyrosine 363, glutamine 389, and arginine 393 together coordinate beta-D-fructose 2,6-bisphosphate. Tyrosine 345 to arginine 348 lines the ATP pocket. ATP is bound by residues glutamine 389 to arginine 393 and tyrosine 425. The tract at residues lysine 475–arginine 504 is disordered. The residue at position 490 (serine 490) is a Phosphoserine; by AMPK and PKA. Residue threonine 492 is modified to Phosphothreonine. Serine 496 is modified (phosphoserine).

In the C-terminal section; belongs to the phosphoglycerate mutase family. In terms of assembly, homodimer. Forms a heterodimer with PFKFB2. Post-translationally, phosphorylation by AMPK stimulates activity.

The enzyme catalyses beta-D-fructose 2,6-bisphosphate + H2O = beta-D-fructose 6-phosphate + phosphate. It catalyses the reaction beta-D-fructose 6-phosphate + ATP = beta-D-fructose 2,6-bisphosphate + ADP + H(+). Its function is as follows. Catalyzes both the synthesis and degradation of fructose 2,6-bisphosphate. This chain is 6-phosphofructo-2-kinase/fructose-2,6-bisphosphatase 3 (Pfkfb3), found in Rattus norvegicus (Rat).